Here is a 377-residue protein sequence, read N- to C-terminus: N5-carboxyaminoimidazole ribonucleotide synthase (377 aa).

Residues Arg93, Lys133, 138 to 144, 175 to 178, Glu183, His206, and 257 to 258 each bind ATP; these read GYDGRGQ, EEFV, and NE. In terms of domain architecture, ATP-grasp spans 97-287; it reads KTLLDHAGVR…QFENHLRAVC (191 aa).

The protein belongs to the PurK/PurT family. As to quaternary structure, homodimer.

The enzyme catalyses 5-amino-1-(5-phospho-beta-D-ribosyl)imidazole + hydrogencarbonate + ATP = 5-carboxyamino-1-(5-phospho-D-ribosyl)imidazole + ADP + phosphate + 2 H(+). The protein operates within purine metabolism; IMP biosynthesis via de novo pathway; 5-amino-1-(5-phospho-D-ribosyl)imidazole-4-carboxylate from 5-amino-1-(5-phospho-D-ribosyl)imidazole (N5-CAIR route): step 1/2. Functionally, catalyzes the ATP-dependent conversion of 5-aminoimidazole ribonucleotide (AIR) and HCO(3)(-) to N5-carboxyaminoimidazole ribonucleotide (N5-CAIR). In Vibrio vulnificus (strain YJ016), this protein is N5-carboxyaminoimidazole ribonucleotide synthase.